The primary structure comprises 383 residues: S-adenosylmethionine synthase (383 aa).

His15 contacts ATP. Asp17 is a binding site for Mg(2+). Glu43 serves as a coordination point for K(+). L-methionine is bound by residues Glu56 and Gln99. Residues 99-109 are flexible loop; that stretch reads QSPDINQGVDR. ATP contacts are provided by residues 164–166, 230–231, Asp239, 245–246, Ala262, and Lys266; these read DAK, RF, and RK. L-methionine is bound at residue Asp239. An L-methionine-binding site is contributed by Lys270.

The protein belongs to the AdoMet synthase family. As to quaternary structure, homotetramer; dimer of dimers. The cofactor is Mg(2+). It depends on K(+) as a cofactor.

It localises to the cytoplasm. The enzyme catalyses L-methionine + ATP + H2O = S-adenosyl-L-methionine + phosphate + diphosphate. It participates in amino-acid biosynthesis; S-adenosyl-L-methionine biosynthesis; S-adenosyl-L-methionine from L-methionine: step 1/1. Its function is as follows. Catalyzes the formation of S-adenosylmethionine (AdoMet) from methionine and ATP. The overall synthetic reaction is composed of two sequential steps, AdoMet formation and the subsequent tripolyphosphate hydrolysis which occurs prior to release of AdoMet from the enzyme. In Shewanella oneidensis (strain ATCC 700550 / JCM 31522 / CIP 106686 / LMG 19005 / NCIMB 14063 / MR-1), this protein is S-adenosylmethionine synthase.